Here is a 244-residue protein sequence, read N- to C-terminus: Phosphoribosyl isomerase A (244 aa).

The Proton acceptor role is filled by Asp10. The active-site Proton donor is the Asp129.

Belongs to the HisA/HisF family.

The protein resides in the cytoplasm. The enzyme catalyses 1-(5-phospho-beta-D-ribosyl)-5-[(5-phospho-beta-D-ribosylamino)methylideneamino]imidazole-4-carboxamide = 5-[(5-phospho-1-deoxy-D-ribulos-1-ylimino)methylamino]-1-(5-phospho-beta-D-ribosyl)imidazole-4-carboxamide. It carries out the reaction N-(5-phospho-beta-D-ribosyl)anthranilate = 1-(2-carboxyphenylamino)-1-deoxy-D-ribulose 5-phosphate. The protein operates within amino-acid biosynthesis; L-histidine biosynthesis; L-histidine from 5-phospho-alpha-D-ribose 1-diphosphate: step 4/9. It participates in amino-acid biosynthesis; L-tryptophan biosynthesis; L-tryptophan from chorismate: step 3/5. In terms of biological role, involved in both the histidine and tryptophan biosynthetic pathways. The protein is Phosphoribosyl isomerase A (priA) of Mycobacterium tuberculosis (strain CDC 1551 / Oshkosh).